The chain runs to 429 residues: MPIIEQVGAREILDSRGNPTVEVEVALIDGTFARAAVPSGASTGEHEAVELRDGGDRYGGKGVQKAVQAVLDEIGPAVIGLNADDQRLVDQALVDLDGTPDKSRLGGNAILGVSLAVAKAAADSAELPLFRYVGGPNAHILPVPMMNILNGGAHADTAVDIQEFMVAPIGAPSFVEALRWGAEVYHALKSVLKKEGLSTGLGDEGGFAPDVAGTTAALDLISRAIESAGLRPGADVALALDAAATEFFTDGTGYVFEGTTRTADQMTEFYAGLLGAYPLVSIEDPLSEDDWDGWAALTASIGDRVQIVGDDIFVTNPERLEEGIERGVANALLVKVNQIGTLTETLDAVTLAHHGGYRTMISHRSGETEDTMIADLAVAIGSGQIKTGAPARSERVAKYNQLLRIEEALGDAARYAGDLAFPRFACETK.

(2R)-2-phosphoglycerate is bound at residue Gln-162. The Proton donor role is filled by Glu-204. Mg(2+) contacts are provided by Asp-241, Glu-283, and Asp-310. 4 residues coordinate (2R)-2-phosphoglycerate: Lys-335, Arg-364, Ser-365, and Lys-386. Lys-335 functions as the Proton acceptor in the catalytic mechanism.

It belongs to the enolase family. Requires Mg(2+) as cofactor.

It localises to the cytoplasm. The protein resides in the secreted. Its subcellular location is the cell surface. It carries out the reaction (2R)-2-phosphoglycerate = phosphoenolpyruvate + H2O. It functions in the pathway carbohydrate degradation; glycolysis; pyruvate from D-glyceraldehyde 3-phosphate: step 4/5. Catalyzes the reversible conversion of 2-phosphoglycerate (2-PG) into phosphoenolpyruvate (PEP). It is essential for the degradation of carbohydrates via glycolysis. The chain is Enolase from Mycobacterium bovis (strain BCG / Pasteur 1173P2).